The chain runs to 343 residues: Type II restriction enzyme BsuMI component YdiS (343 aa).

As to quaternary structure, bsuMI restriction activity requires YdiR, YdiS and YdjA.

It catalyses the reaction Endonucleolytic cleavage of DNA to give specific double-stranded fragments with terminal 5'-phosphates.. In terms of biological role, a P subtype restriction enzyme that recognizes the double-stranded sequence 5'-CTCGAG-3'; the cleavage site is unknown. This chain is Type II restriction enzyme BsuMI component YdiS (ydiS), found in Bacillus subtilis (strain 168).